Consider the following 704-residue polypeptide: DNA ligase (704 aa).

NAD(+)-binding positions include 43–47 (DADYD), 92–93 (SL), and Glu124. Lys126 (N6-AMP-lysine intermediate) is an active-site residue. NAD(+) contacts are provided by Arg147, Glu182, Lys298, and Lys322. Residues Cys427, Cys430, Cys445, and Cys451 each coordinate Zn(2+). The BRCT domain occupies 625 to 704 (PVASPVAGKI…DGWLRLIGDA (80 aa)).

The protein belongs to the NAD-dependent DNA ligase family. LigA subfamily. It depends on Mg(2+) as a cofactor. Requires Mn(2+) as cofactor.

It catalyses the reaction NAD(+) + (deoxyribonucleotide)n-3'-hydroxyl + 5'-phospho-(deoxyribonucleotide)m = (deoxyribonucleotide)n+m + AMP + beta-nicotinamide D-nucleotide.. DNA ligase that catalyzes the formation of phosphodiester linkages between 5'-phosphoryl and 3'-hydroxyl groups in double-stranded DNA using NAD as a coenzyme and as the energy source for the reaction. It is essential for DNA replication and repair of damaged DNA. In Cereibacter sphaeroides (strain ATCC 17023 / DSM 158 / JCM 6121 / CCUG 31486 / LMG 2827 / NBRC 12203 / NCIMB 8253 / ATH 2.4.1.) (Rhodobacter sphaeroides), this protein is DNA ligase.